A 186-amino-acid chain; its full sequence is Ribosome-recycling factor (186 aa).

It belongs to the RRF family.

The protein resides in the cytoplasm. Functionally, responsible for the release of ribosomes from messenger RNA at the termination of protein biosynthesis. May increase the efficiency of translation by recycling ribosomes from one round of translation to another. The protein is Ribosome-recycling factor of Rickettsia akari (strain Hartford).